A 213-amino-acid polypeptide reads, in one-letter code: ATP phosphoribosyltransferase (213 aa).

This sequence belongs to the ATP phosphoribosyltransferase family. Short subfamily. Heteromultimer composed of HisG and HisZ subunits.

Its subcellular location is the cytoplasm. The catalysed reaction is 1-(5-phospho-beta-D-ribosyl)-ATP + diphosphate = 5-phospho-alpha-D-ribose 1-diphosphate + ATP. Its pathway is amino-acid biosynthesis; L-histidine biosynthesis; L-histidine from 5-phospho-alpha-D-ribose 1-diphosphate: step 1/9. Functionally, catalyzes the condensation of ATP and 5-phosphoribose 1-diphosphate to form N'-(5'-phosphoribosyl)-ATP (PR-ATP). Has a crucial role in the pathway because the rate of histidine biosynthesis seems to be controlled primarily by regulation of HisG enzymatic activity. The sequence is that of ATP phosphoribosyltransferase from Synechococcus sp. (strain RCC307).